We begin with the raw amino-acid sequence, 313 residues long: Ribosomal protein L11 methyltransferase (313 aa).

Thr161, Gly182, Asp204, and Asn247 together coordinate S-adenosyl-L-methionine.

This sequence belongs to the methyltransferase superfamily. PrmA family.

The protein resides in the cytoplasm. It carries out the reaction L-lysyl-[protein] + 3 S-adenosyl-L-methionine = N(6),N(6),N(6)-trimethyl-L-lysyl-[protein] + 3 S-adenosyl-L-homocysteine + 3 H(+). Methylates ribosomal protein L11. The polypeptide is Ribosomal protein L11 methyltransferase (Alkaliphilus oremlandii (strain OhILAs) (Clostridium oremlandii (strain OhILAs))).